Consider the following 216-residue polypeptide: Pyrophosphatase PpaX (216 aa).

Catalysis depends on Asp9, which acts as the Nucleophile.

The protein belongs to the HAD-like hydrolase superfamily. PpaX family. Requires Mg(2+) as cofactor.

The catalysed reaction is diphosphate + H2O = 2 phosphate + H(+). Hydrolyzes pyrophosphate formed during P-Ser-HPr dephosphorylation by HPrK/P. Might play a role in controlling the intracellular pyrophosphate pool. The protein is Pyrophosphatase PpaX of Bacillus anthracis (strain CDC 684 / NRRL 3495).